The sequence spans 997 residues: Chromosomal passenger complex protein bir1 (997 aa).

BIR repeat units lie at residues 25–99 and 120–194; these read RLDT…PWAY and REQT…VFFT. Residues cysteine 163, cysteine 166, histidine 183, and cysteine 190 each contribute to the Zn(2+) site. 5 disordered regions span residues 217-329, 370-527, 682-701, 755-782, and 817-838; these read EDLT…FSKG, TVSD…ENDE, TRDV…NHEE, SPKL…EKEA, and RTSV…ETKV. Polar residues predominate over residues 240–252; the sequence is TLNFSPSRKNNLN. The segment covering 288-299 has biased composition (basic residues); that stretch reads PRRKNKSPKKSK. Over residues 311 to 320 the composition is skewed to acidic residues; that stretch reads SDEDEDDDDL. A compositionally biased stretch (polar residues) spans 370 to 392; that stretch reads TVSDITGHQSVTDESDEQNNCMS. Residues 408–423 show a composition bias toward low complexity; it reads SVVSKSKEISSSVSSV. The span at 426–451 shows a compositional bias: basic and acidic residues; the sequence is EQNHTEKQVAIETPEQQKVEKEDEHL. 2 stretches are compositionally biased toward polar residues: residues 463–476 and 485–512; these read KQPI…SSPD and RVSS…FSNI. Over residues 756-772 the composition is skewed to polar residues; the sequence is PKLQSKNNQTVEAVNTE. Residues 773–782 are compositionally biased toward basic and acidic residues; sequence TSDKLQEKEA. The segment covering 817–830 has biased composition (polar residues); it reads RTSVQNGTRSVSKN.

In terms of assembly, component of the CPC complex at least composed of ark1, bir1 and pic1. Interacts with the mitotic checkpoint complex (MCC) subunit mad3. Post-translationally, phosphorylated by ark1.

Its subcellular location is the nucleus. It is found in the cytoplasm. The protein resides in the cytoskeleton. It localises to the spindle. The protein localises to the chromosome. Its subcellular location is the centromere. Component of the chromosomal passenger complex (CPC), a complex that acts as a key regulator of chromosome segregation and cytokinesis. Has a role in chromosome segregation by recruiting condensin and ark1 kinase to appropriate sites as the cell progresses through mitosis. Ark1 activity depends upon bir1 function and phosphorylation. Ark1 with bir1 function is required for full-scale association with kinetochores and formation of a complex with mad3. This chain is Chromosomal passenger complex protein bir1 (bir1), found in Schizosaccharomyces pombe (strain 972 / ATCC 24843) (Fission yeast).